A 387-amino-acid polypeptide reads, in one-letter code: Diels-Alderase ORF3 (387 aa).

Belongs to the Diels-Alderase family.

The protein operates within secondary metabolite biosynthesis. Functionally, diels-Alderase; part of the gene cluster that mediates the biosynthesis of a tyrosine-derived cytochalasan acting as a fungal signal recognized by resistant rice plants and leads to avirulence in Pi33 resistant rice cultivars. The first step in the pathway is catalyzed by the hybrid PKS-NRPS ACE1, assisted by the enoyl reductase RAP1, that are responsible for fusion of the tyrosine precursor and the polyketide backbone. The polyketide synthase module (PKS) of ACE1 is responsible for the synthesis of the polyketide backbone and the downstream nonribosomal peptide synthetase (NRPS) amidates the carboxyl end of the polyketide with the tyrosine precursor. Because ACE1 lacks a designated enoylreductase (ER) domain, the required activity is provided the enoyl reductase RAP1. Reduction by the hydrolyase ORFZ, followed by dehydration and intra-molecular Diels-Alder cyclization by the Diels-Alderase ORF3 then yield the required isoindolone-fused macrocycle. A number of oxidative steps catalyzed by the tailoring enzymes identified within the cluster, including cytochrome P450 monooxygenases CYP1 to CYP4, the FAD-linked oxidoreductase OXR2 and the short-chain dehydrogenase/reductase OXR1, are further required to afford the final cytochalasans that confer avirulence and which have still to be identified. The monooxygenase CYP1 has been shown to be a site-selective C-18 hydroxylase whereas the function of CYP3 is the site-selective epoxidation of the C-6/C-7 olefin that is present in some intermediate compounds. Finally, SYN2 and RAP2 are not required for avirulence in Pi33 resistant rice cultivars. This Pyricularia oryzae (strain 70-15 / ATCC MYA-4617 / FGSC 8958) (Rice blast fungus) protein is Diels-Alderase ORF3.